The sequence spans 105 residues: Nucleoid-associated protein SSP2277 (105 aa).

The interval 1-41 is disordered; the sequence is MRGGGNMQQMMKQMQKMQKKMGEEQEKLKEEKVQGTAGGGM. Over residues 7–16 the composition is skewed to low complexity; it reads MQQMMKQMQK. The segment covering 20 to 33 has biased composition (basic and acidic residues); it reads KMGEEQEKLKEEKV.

The protein belongs to the YbaB/EbfC family. In terms of assembly, homodimer.

Its subcellular location is the cytoplasm. It is found in the nucleoid. Binds to DNA and alters its conformation. May be involved in regulation of gene expression, nucleoid organization and DNA protection. This chain is Nucleoid-associated protein SSP2277, found in Staphylococcus saprophyticus subsp. saprophyticus (strain ATCC 15305 / DSM 20229 / NCIMB 8711 / NCTC 7292 / S-41).